Consider the following 189-residue polypeptide: Photosystem I assembly protein Ycf4 (189 aa).

2 helical membrane-spanning segments follow: residues 25–45 (SVYF…LAGL) and 62–82 (LVFI…SLAG).

Belongs to the Ycf4 family.

It localises to the cellular thylakoid membrane. Its function is as follows. Seems to be required for the assembly of the photosystem I complex. The sequence is that of Photosystem I assembly protein Ycf4 from Synechococcus sp. (strain JA-3-3Ab) (Cyanobacteria bacterium Yellowstone A-Prime).